A 424-amino-acid polypeptide reads, in one-letter code: MKKLLFAIPLVVPFYSHSAETVESCLAKPHTENSFTNVWKDDKTLDRYANYEGCLWNATGVVVCTGDETQCYGTWVPIGLAIPENEGGGSEGGGSEGGGSEGGGTKPPEYGDTPIPGYTYINPLDGTYPPGTEQNPANPNPSLEESQPLNTFMFQNNRFRNRQGALTVYTGTVTQGTDPVKTYYQYTPVSSKAMYDAYWNGKFRDCAFHSGFNEDPFVCEYQGQSSDLPQPPVNAGGGSGGGSGGGSEGGGSEGGGSEGGGSEGGGSGGGSGSGDFDYEKMANANKGAMTENADENALQSDAKGKLDSVATDYGAAIDGFIGDVSGLANGNGATGDFAGSNSQMAQVGDGDNSPLMNNFRQYLPSLPQSVECRPYVFGAGKPYEFSIDCDKINLFRGVFAFLLYVATFMYVFSTFANILRNKES.

The N-terminal stretch at 1–18 (MKKLLFAIPLVVPFYSHS) is a signal peptide. An N1 region spans residues 19–85 (AETVESCLAK…VPIGLAIPEN (67 aa)). 2 cysteine pairs are disulfide-bonded: Cys-25-Cys-54 and Cys-64-Cys-71. The tract at residues 83-147 (PENEGGGSEG…NPNPSLEESQ (65 aa)) is disordered. Positions 86–104 (EGGGSEGGGSEGGGSEGGG) are G1 (Gly-rich linker). The span at 86–105 (EGGGSEGGGSEGGGSEGGGT) shows a compositional bias: gly residues. The interval 105–141 (TKPPEYGDTPIPGYTYINPLDGTYPPGTEQNPANPNP) is hinge. Polar residues predominate over residues 132-147 (TEQNPANPNPSLEESQ). The segment at 142–228 (SLEESQPLNT…CEYQGQSSDL (87 aa)) is N2. Residues Cys-206 and Cys-219 are joined by a disulfide bond. The segment at 222–279 (QGQSSDLPQPPVNAGGGSGGGSGGGSEGGGSEGGGSEGGGSEGGGSGGGSGSGDFDYE) is disordered. Gly residues predominate over residues 235 to 273 (AGGGSGGGSGGGSEGGGSEGGGSEGGGSEGGGSGGGSGS). A not essential for gene 3 function region spans residues 253–262 (EGGGSEGGGS). The tract at residues 275 to 424 (DFDYEKMANA…FANILRNKES (150 aa)) is CT. A helical transmembrane segment spans residues 398–418 (VFAFLLYVATFMYVFSTFANI).

It belongs to the inovirus G3P protein family. In terms of assembly, interacts with G6P; this interaction is required for proper integration of G3P and G6P into the virion. Interacts with G8P. Interacts with the tip of the host pilus. Interacts (via N-terminus) with host TolA. Interacts (via transmembrane domain) with host TolQ (via 2nd and 3rd transmembrane domains); this interaction allows the phage translocation across the host inner membrane. Interacts (via transmembrane domain) with host TolR (via transmembrane domain); this interaction allows the phage translocation across the host inner membrane.

It is found in the virion. It localises to the host membrane. Functionally, plays essential roles both in the penetration of the viral genome into the bacterial host via pilus retraction and in the extrusion process. During the initial step of infection, G3P mediates adsorption of the phage to its primary receptor, the tip of host F-pilus. Attachment of the phage causes pilus retraction bringing the viral particle into close proximity of the host cell inner membrane. Binding to the host pilus initiates a change in the G3P conformation, allowing subsequent interaction with the host entry receptors TolA, TolQ and TolR and penetration of the viral DNA into the host cytoplasm. In the extrusion process, G3P mediates the release of the membrane-anchored virion from the cell via its C-terminal domain. In Enterobacteria phage fd (Bacteriophage fd), this protein is Attachment protein G3P (III).